The following is a 496-amino-acid chain: Glutamyl-tRNA(Gln) amidotransferase subunit A (496 aa).

Catalysis depends on charge relay system residues K75 and S150. Catalysis depends on S174, which acts as the Acyl-ester intermediate.

It belongs to the amidase family. GatA subfamily. Heterotrimer of A, B and C subunits.

It carries out the reaction L-glutamyl-tRNA(Gln) + L-glutamine + ATP + H2O = L-glutaminyl-tRNA(Gln) + L-glutamate + ADP + phosphate + H(+). Functionally, allows the formation of correctly charged Gln-tRNA(Gln) through the transamidation of misacylated Glu-tRNA(Gln) in organisms which lack glutaminyl-tRNA synthetase. The reaction takes place in the presence of glutamine and ATP through an activated gamma-phospho-Glu-tRNA(Gln). The polypeptide is Glutamyl-tRNA(Gln) amidotransferase subunit A (Burkholderia ambifaria (strain MC40-6)).